Consider the following 218-residue polypeptide: 2-C-methyl-D-erythritol 4-phosphate cytidylyltransferase (218 aa).

It belongs to the IspD/TarI cytidylyltransferase family. IspD subfamily.

It carries out the reaction 2-C-methyl-D-erythritol 4-phosphate + CTP + H(+) = 4-CDP-2-C-methyl-D-erythritol + diphosphate. The protein operates within isoprenoid biosynthesis; isopentenyl diphosphate biosynthesis via DXP pathway; isopentenyl diphosphate from 1-deoxy-D-xylulose 5-phosphate: step 2/6. Its function is as follows. Catalyzes the formation of 4-diphosphocytidyl-2-C-methyl-D-erythritol from CTP and 2-C-methyl-D-erythritol 4-phosphate (MEP). The sequence is that of 2-C-methyl-D-erythritol 4-phosphate cytidylyltransferase from Chlamydia muridarum (strain MoPn / Nigg).